The primary structure comprises 390 residues: Cell division protein FtsZ (390 aa).

GTP contacts are provided by residues 20–24 (GGGNN), 106–108 (GTG), E137, R141, and D184.

It belongs to the FtsZ family. As to quaternary structure, homodimer. Polymerizes to form a dynamic ring structure in a strictly GTP-dependent manner. Interacts directly with several other division proteins.

The protein localises to the cytoplasm. Its function is as follows. Essential cell division protein that forms a contractile ring structure (Z ring) at the future cell division site. The regulation of the ring assembly controls the timing and the location of cell division. One of the functions of the FtsZ ring is to recruit other cell division proteins to the septum to produce a new cell wall between the dividing cells. Binds GTP and shows GTPase activity. This chain is Cell division protein FtsZ, found in Mycoplasmopsis pulmonis (strain UAB CTIP) (Mycoplasma pulmonis).